Reading from the N-terminus, the 413-residue chain is Protein esc1 (413 aa).

Residues 1–22 (MSSYALPSMQPTPTSSIPLRQM) are compositionally biased toward polar residues. Disordered stretches follow at residues 1–202 (MSSY…NQPS) and 230–265 (MYVP…YSQG). The segment covering 23 to 42 (SQPTTSAPSNSASSTPYSPQ) has biased composition (low complexity). Over residues 43–63 (QVPLTHNSYPLSTPSSFQHGQ) the composition is skewed to polar residues. 2 stretches are compositionally biased toward low complexity: residues 86-103 (SAAP…STAA) and 116-126 (SSSSYVYSVPP). Positions 127–136 (TNSTTSQASA) are enriched in polar residues. Residues 150 to 197 (STTLTPSTTDSSSTDVSSSDSVSTSASSSNASNTVSVTSPASSSATPL) show a composition bias toward low complexity. In terms of domain architecture, bHLH spans 334–385 (ELRTSHKLAERKRRKEIKELFDDLKDALPLDKSTKSSKWGLLTRAIQYIEQL).

Efficient DNA binding requires dimerization with another bHLH protein.

It is found in the nucleus. Its function is as follows. Involved in the sexual differentiation process. Modulate the ability of the cell to differentiate in response to the nitrogen starvation signal; in particular in response to decreases in the level of cellular cAMP. The polypeptide is Protein esc1 (esc1) (Schizosaccharomyces pombe (strain 972 / ATCC 24843) (Fission yeast)).